Consider the following 453-residue polypeptide: Putative sodium-coupled neutral amino acid transporter 11 (453 aa).

Positions 1 to 10 are enriched in polar residues; it reads MSYQQPQLSG. A disordered region spans residues 1–34; that stretch reads MSYQQPQLSGPLQRETDSSDRESLISGHEHGGKS. The segment covering 14 to 32 has biased composition (basic and acidic residues); it reads RETDSSDRESLISGHEHGG. Transmembrane regions (helical) follow at residues 39-59, 66-86, 106-126, 150-170, 179-199, 222-242, 262-282, 299-319, 337-357, 359-379, and 398-418; these read AVFN…PYSM, LGIL…VLLI, GFPG…IAMI, GWFI…TLPL, LGKI…IVMT, AIQA…CFLV, ILVS…TFTG, VTFG…IECF, VFHT…SLMI, CLGI…IFII, and IMAC…FVMA. N-linked (GlcNAc...) asparagine glycans are attached at residues asparagine 438 and asparagine 443.

Belongs to the amino acid/polyamine transporter 2 family.

It localises to the membrane. Its function is as follows. Putative sodium-dependent amino acid/proton antiporter. This Mus musculus (Mouse) protein is Putative sodium-coupled neutral amino acid transporter 11 (Slc38a11).